The primary structure comprises 315 residues: Ribose-phosphate pyrophosphokinase (315 aa).

Residues 37–39 (DGE) and 96–97 (RQ) each bind ATP. Mg(2+) is bound by residues His-131 and Asp-170. Residue Lys-194 is part of the active site. D-ribose 5-phosphate contacts are provided by residues Arg-196, Asp-220, and 224–228 (DTGGT).

This sequence belongs to the ribose-phosphate pyrophosphokinase family. Class I subfamily. In terms of assembly, homohexamer. Mg(2+) serves as cofactor.

It localises to the cytoplasm. The catalysed reaction is D-ribose 5-phosphate + ATP = 5-phospho-alpha-D-ribose 1-diphosphate + AMP + H(+). It participates in metabolic intermediate biosynthesis; 5-phospho-alpha-D-ribose 1-diphosphate biosynthesis; 5-phospho-alpha-D-ribose 1-diphosphate from D-ribose 5-phosphate (route I): step 1/1. Involved in the biosynthesis of the central metabolite phospho-alpha-D-ribosyl-1-pyrophosphate (PRPP) via the transfer of pyrophosphoryl group from ATP to 1-hydroxyl of ribose-5-phosphate (Rib-5-P). This is Ribose-phosphate pyrophosphokinase from Shewanella oneidensis (strain ATCC 700550 / JCM 31522 / CIP 106686 / LMG 19005 / NCIMB 14063 / MR-1).